Consider the following 400-residue polypeptide: Trans-enoyl reductase ucsL (400 aa).

50-53 (TDHK) contributes to the NADP(+) binding site. 145-152 (SVHGSVAL) is a binding site for substrate. Residues 204–207 (STAC), 227–230 (SPRN), Tyr-245, and 292–293 (LE) each bind NADP(+). 313–317 (GPVMF) contacts substrate. 389 to 390 (VS) contacts NADP(+).

Belongs to the zinc-containing alcohol dehydrogenase family. As to quaternary structure, monomer.

It participates in mycotoxin biosynthesis. Trans-enoyl reductase; part of the gene cluster that mediates the biosynthesis of UCS1025A, a member of the pyrrolizidinone family that acts as a strong telomerase inhibitor and displays potent antibacterial and antitumor properties. These compounds share a hemiaminal-containing pyrrolizidinone core fused with a gamma-lactone, giving a furopyrrolizidine that is connected to a decalin fragment. The polyketide synthase module (PKS) of the PKS-NRPS ucsA is responsible for the synthesis of the polyketide backbone via the condensation of an acetyl-CoA starter unit with 6 malonyl-CoA units. The downstream nonribosomal peptide synthetase (NRPS) module then amidates the carboxyl end of the polyketide with a 2S,3S-methylproline derived from L-isoleucine by the 2-oxoglutarate-dependent dioxygenase ucsF which converts L-isoleucine to (4S,5S)-4-methylpyrroline-5-carboxylate that is further converted to 2S,3S-methylproline by the pyrroline-5-carboxylate reductase ucsG. Reductive release of the completed aminoacyl polyketide from the assembly line can form the 3-pyrrolin-2-one structure via an intramolecular Knoevenagel reaction. Because ucsA lacks a designated enoylreductase (ER) domain, the required activity is provided the enoyl reductase ucsL. This keto acyclic precursor is the substrate of the Diels-Alderase ucsH, that catalyzes the Diels-Alder cycloaddition. Oxidation of the 3S-methyl group to a carboxylate by the cytochrome P450 monooxygenase ucsK allows an oxa-Michael cyclization that might involve the reductase/dehydrogenase ucsI and which furnishes the furopyrrolizidine. The oxidase ucsJ likely plays a critical role in stereoselective reduction of the C5-C6 double bond to afford the required R-configured carboxylate group. Further enolization and oxidation at C5 by an unidentified enzyme affords the last intermediate that can undergo oxa-Michael cyclization to yield UCS1025A. In Acremonium sp, this protein is Trans-enoyl reductase ucsL.